Here is a 171-residue protein sequence, read N- to C-terminus: Envelope protein UL128 (171 aa).

Belongs to the HHV-5 UL128 protein family. As to quaternary structure, forms the envelope pentamer complex (PC) composed of gH, gL, UL128, UL130, and UL131A. The pentamer interacts with host NRP2.

The protein localises to the virion membrane. Plays a role in viral entry into host cells. Forms a pentameric complex at the surface of the viral envelope together with gH, gL, UL130 and UL131. This complex is required for entry in epithelial, endothelial and myeloid host cells. Mechanistically, engages host receptor(s) including neurophilin 2/NRP2 to mediate infection. Additionally, monomeric UL128 may interfere with certain inflammatory cytokines to increase infection and dissemination by blocking monocytes migration. The sequence is that of Envelope protein UL128 (UL128) from Human cytomegalovirus (strain Merlin) (HHV-5).